Reading from the N-terminus, the 89-residue chain is Small ribosomal subunit protein uS15 (89 aa).

The protein belongs to the universal ribosomal protein uS15 family. Part of the 30S ribosomal subunit. Forms a bridge to the 50S subunit in the 70S ribosome, contacting the 23S rRNA.

One of the primary rRNA binding proteins, it binds directly to 16S rRNA where it helps nucleate assembly of the platform of the 30S subunit by binding and bridging several RNA helices of the 16S rRNA. In terms of biological role, forms an intersubunit bridge (bridge B4) with the 23S rRNA of the 50S subunit in the ribosome. The sequence is that of Small ribosomal subunit protein uS15 from Shouchella clausii (strain KSM-K16) (Alkalihalobacillus clausii).